A 248-amino-acid chain; its full sequence is Ribosomal RNA small subunit methyltransferase G (248 aa).

S-adenosyl-L-methionine is bound by residues Gly-85, Phe-90, Ile-137–Glu-138, and Arg-156.

The protein belongs to the methyltransferase superfamily. RNA methyltransferase RsmG family.

Its subcellular location is the cytoplasm. Functionally, specifically methylates the N7 position of a guanine in 16S rRNA. This chain is Ribosomal RNA small subunit methyltransferase G, found in Parasynechococcus marenigrum (strain WH8102).